A 566-amino-acid chain; its full sequence is Alpha-keto-acid decarboxylase (566 aa).

A thiamine diphosphate-binding site is contributed by glutamate 61. The interval threonine 396–valine 478 is thiamine pyrophosphate binding. Mg(2+) is bound by residues aspartate 446, asparagine 473, and glycine 475.

Belongs to the TPP enzyme family. The cofactor is a metal cation. Thiamine diphosphate serves as cofactor.

Its function is as follows. Decarboxylates branched-chain and aromatic alpha-keto acids to aldehydes. In Mycobacterium ulcerans (strain Agy99), this protein is Alpha-keto-acid decarboxylase (kdc).